Here is a 144-residue protein sequence, read N- to C-terminus: Putative lipoprotein MAH_0816 (144 aa).

Residues 1 to 24 (MRWPMQNRTTAVIAVALATTALVA) form the signal peptide. Cys25 carries N-palmitoyl cysteine lipidation. Residue Cys25 is the site of S-diacylglycerol cysteine attachment.

Belongs to the mycobacterial 19 kDa antigen family.

The protein resides in the cell membrane. The protein is Putative lipoprotein MAH_0816 of Mycobacterium avium subsp. hominissuis (strain TH135).